We begin with the raw amino-acid sequence, 367 residues long: Glutamate 5-kinase (367 aa).

Position 10 (lysine 10) interacts with ATP. Substrate contacts are provided by serine 50, aspartate 137, and asparagine 149. ATP contacts are provided by residues 169-170 and 211-217; these read TD and TGGMSTK. The PUA domain maps to 275 to 353; that stretch reads AGEITVDEGA…QQIDAILGYE (79 aa).

This sequence belongs to the glutamate 5-kinase family.

It localises to the cytoplasm. It catalyses the reaction L-glutamate + ATP = L-glutamyl 5-phosphate + ADP. Its pathway is amino-acid biosynthesis; L-proline biosynthesis; L-glutamate 5-semialdehyde from L-glutamate: step 1/2. In terms of biological role, catalyzes the transfer of a phosphate group to glutamate to form L-glutamate 5-phosphate. This is Glutamate 5-kinase from Salmonella arizonae (strain ATCC BAA-731 / CDC346-86 / RSK2980).